A 784-amino-acid chain; its full sequence is LPS-assembly protein LptD (784 aa).

An N-terminal signal peptide occupies residues Met1–Ala24. Disulfide bonds link Cys31–Cys724 and Cys173–Cys725.

It belongs to the LptD family. In terms of assembly, component of the lipopolysaccharide transport and assembly complex. Interacts with LptE and LptA. Contains two intramolecular disulfide bonds.

It is found in the cell outer membrane. In terms of biological role, together with LptE, is involved in the assembly of lipopolysaccharide (LPS) at the surface of the outer membrane. This Escherichia coli O157:H7 protein is LPS-assembly protein LptD.